A 379-amino-acid chain; its full sequence is Epoxyqueuosine reductase (379 aa).

The active-site Proton donor is D139. The 33-residue stretch at 181-213 (IPLPVDQPVEEGCGKCVACMTICPTGAIVEPYT) folds into the 4Fe-4S ferredoxin-type domain. Residues C193, C196, C199, C203, C219, C246, C249, and C253 each coordinate [4Fe-4S] cluster.

This sequence belongs to the QueG family. As to quaternary structure, monomer. The cofactor is cob(II)alamin. It depends on [4Fe-4S] cluster as a cofactor.

The protein resides in the cytoplasm. It catalyses the reaction epoxyqueuosine(34) in tRNA + AH2 = queuosine(34) in tRNA + A + H2O. The protein operates within tRNA modification; tRNA-queuosine biosynthesis. Functionally, catalyzes the conversion of epoxyqueuosine (oQ) to queuosine (Q), which is a hypermodified base found in the wobble positions of tRNA(Asp), tRNA(Asn), tRNA(His) and tRNA(Tyr). The sequence is that of Epoxyqueuosine reductase from Shigella dysenteriae serotype 1 (strain Sd197).